The primary structure comprises 605 residues: Pyruvate decarboxylase 1 (605 aa).

Residues Asp-67 and His-154 each coordinate substrate. The interval 432 to 514 is thiamine pyrophosphate binding; that stretch reads DSWFNCQKLR…FLINNGGYTI (83 aa). Mg(2+) contacts are provided by Asp-482, Asn-509, and Gly-511. Glu-515 contributes to the substrate binding site.

This sequence belongs to the TPP enzyme family. Homotetramer. The cofactor is a metal cation. Thiamine diphosphate serves as cofactor.

The catalysed reaction is a 2-oxocarboxylate + H(+) = an aldehyde + CO2. This chain is Pyruvate decarboxylase 1 (PDC1), found in Oryza sativa subsp. indica (Rice).